The following is a 355-amino-acid chain: Cobalt-precorrin-5B C(1)-methyltransferase (355 aa).

This sequence belongs to the CbiD family.

It catalyses the reaction Co-precorrin-5B + S-adenosyl-L-methionine = Co-precorrin-6A + S-adenosyl-L-homocysteine. It participates in cofactor biosynthesis; adenosylcobalamin biosynthesis; cob(II)yrinate a,c-diamide from sirohydrochlorin (anaerobic route): step 6/10. In terms of biological role, catalyzes the methylation of C-1 in cobalt-precorrin-5B to form cobalt-precorrin-6A. This is Cobalt-precorrin-5B C(1)-methyltransferase from Sulfolobus acidocaldarius (strain ATCC 33909 / DSM 639 / JCM 8929 / NBRC 15157 / NCIMB 11770).